A 698-amino-acid chain; its full sequence is ATP-dependent RNA helicase DHX33 (698 aa).

Disordered stretches follow at residues 1–20 (MPEEASLPPAKRFRPGSCPP) and 29–50 (TAGGGGGAGGGRRQTPPLAQPS). Residues 1–71 (MPEEASLPPA…RRSLPIFRAR (71 aa)) are required for nucleolar location. Residues 30-40 (AGGGGGAGGGR) show a composition bias toward gly residues. One can recognise a Helicase ATP-binding domain in the interval 75 to 243 (LAQLRNLDNA…FNRAPVLYLE (169 aa)). 88–95 (GETGSGKT) is a binding site for ATP. Positions 185–188 (DEAH) match the DEAH box motif. One can recognise a Helicase C-terminal domain in the interval 271-441 (QIHQEAPASQ…SVILQLLAMK (171 aa)). Residues 462-553 (AIAQLDLLGA…ISSEGDHITL (92 aa)) are HA2; required for interaction with EIF3G and RPL26. Residues 536 to 550 (VQSVRKKFISSEGDH) carry the Critical for rDNA-binding motif.

It belongs to the DEAD box helicase family. DEAH subfamily. In terms of assembly, interacts with UBTF. Interacts with DDX3X, EIF3G and EIF3H; the interaction is independent of RNA. Interacts (via HA2 region and Helicase C-terminal domain) with the components of the large ribosomal subunit RPL3, RPL7, RPL26 and RPL27. Binds to mRNA. Interacts (via the helicase C-terminal domain) with MAVS. Binds to double-stranded RNA (via the helicase C-terminal domain). In terms of processing, ubiquitinated, leading to its degradation by the proteasome. Deubiquitinated by USP36.

The protein localises to the nucleus. Its subcellular location is the nucleolus. It is found in the nucleoplasm. The protein resides in the cytoplasm. It localises to the inflammasome. It catalyses the reaction ATP + H2O = ADP + phosphate + H(+). In terms of biological role, implicated in nucleolar organization, ribosome biogenesis, protein synthesis and cytoplasmic dsRNA sensing. Stimulates RNA polymerase I transcription of the 47S precursor rRNA. Associates with ribosomal DNA (rDNA) loci where it is involved in POLR1A recruitment. In the cytoplasm, promotes elongation-competent 80S ribosome assembly at the late stage of mRNA translation initiation. Senses cytosolic dsRNA mediating NLRP3 inflammasome formation in macrophages and type I interferon production in myeloid dendritic cells. Required for NLRP3 activation induced by viral dsRNA and bacterial RNA. In dendritic cells, required for induction of type I interferon production induced by cytoplasmic dsRNA via the activation of MAPK and NF-kappa-B signaling pathways. The sequence is that of ATP-dependent RNA helicase DHX33 from Mus musculus (Mouse).